The chain runs to 171 residues: Protein-export protein SecB (171 aa).

It belongs to the SecB family. Homotetramer, a dimer of dimers. One homotetramer interacts with 1 SecA dimer.

The protein resides in the cytoplasm. In terms of biological role, one of the proteins required for the normal export of preproteins out of the cell cytoplasm. It is a molecular chaperone that binds to a subset of precursor proteins, maintaining them in a translocation-competent state. It also specifically binds to its receptor SecA. This chain is Protein-export protein SecB, found in Granulibacter bethesdensis (strain ATCC BAA-1260 / CGDNIH1).